Reading from the N-terminus, the 660-residue chain is Cullin-associated NEDD8-dissociated protein 1 homolog (660 aa).

Residue Lys16 forms a Glycyl lysine isopeptide (Lys-Gly) (interchain with G-Cter in NEDD8) linkage. The tract at residues 339-364 is disordered; the sequence is TQNENDHGSDNLIDSDDGFGSDNDPE. The segment covering 351–363 has biased composition (acidic residues); it reads IDSDDGFGSDNDP.

Interacts with unneddylated cullin CDC53. Neddylated at Lys-16.

In terms of biological role, assembly factor of SCF (SKP1-CUL1-F-box protein) E3 ubiquitin ligase complexes that promotes the exchange of the substrate-recognition F-box subunit in SCF complexes, thereby playing a key role in the cellular repertoire of SCF complexes. Acts as a F-box protein exchange factor. Involved in the aging process. Longevity-assurance protein. The polypeptide is Cullin-associated NEDD8-dissociated protein 1 homolog (LAG2) (Saccharomyces cerevisiae (strain ATCC 204508 / S288c) (Baker's yeast)).